Consider the following 347-residue polypeptide: Protein-glutamate methylesterase/protein-glutamine glutaminase 4 (347 aa).

The Response regulatory domain maps to 3-121 (KVLIVDDSAS…HPNHEREARS (119 aa)). The residue at position 54 (aspartate 54) is a 4-aspartylphosphate. The CheB-type methylesterase domain occupies 157–342 (PARLKAVAIG…PDRIVTALTS (186 aa)). Active-site residues include serine 168, histidine 195, and aspartate 289.

This sequence belongs to the CheB family. In terms of processing, phosphorylated by CheA. Phosphorylation of the N-terminal regulatory domain activates the methylesterase activity.

It localises to the cytoplasm. It carries out the reaction [protein]-L-glutamate 5-O-methyl ester + H2O = L-glutamyl-[protein] + methanol + H(+). The enzyme catalyses L-glutaminyl-[protein] + H2O = L-glutamyl-[protein] + NH4(+). Its function is as follows. Involved in chemotaxis. Part of a chemotaxis signal transduction system that modulates chemotaxis in response to various stimuli. Catalyzes the demethylation of specific methylglutamate residues introduced into the chemoreceptors (methyl-accepting chemotaxis proteins or MCP) by CheR. Also mediates the irreversible deamidation of specific glutamine residues to glutamic acid. The sequence is that of Protein-glutamate methylesterase/protein-glutamine glutaminase 4 from Geobacter metallireducens (strain ATCC 53774 / DSM 7210 / GS-15).